A 298-amino-acid chain; its full sequence is ADP/ATP translocase 3 (298 aa).

M1 bears the N-acetylmethionine mark. Topologically, residues M1 to S7 are mitochondrial intermembrane. Residue T2 is modified to N-acetylthreonine; in ADP/ATP translocase 3, N-terminally processed. Residues I6 to I98 form a Solcar 1 repeat. A helical transmembrane segment spans residues F8 to Q37. Over V38–N74 the chain is Mitochondrial matrix. K52 is modified (N6,N6,N6-trimethyllysine). Residues L75 to F99 form a helical membrane-spanning segment. 2 residues coordinate ADP: R80 and K92. Residues L100–F109 are Mitochondrial intermembrane-facing. K105 carries the post-translational modification N6-acetyllysine. The chain crosses the membrane as a helical span at residues W110–F130. 2 Solcar repeats span residues R111–M201 and V212–V297. The Mitochondrial matrix portion of the chain corresponds to V131–N178. Residues V179–K199 form a helical membrane-spanning segment. Topologically, residues G200–I210 are mitochondrial intermembrane. The helical transmembrane segment at V211–F231 threads the bilayer. Residues D232–G273 are Mitochondrial matrix-facing. R235 serves as a coordination point for ADP. Positions R235 to M240 are important for transport activity. The short motif at R235–M240 is the Nucleotide carrier signature motif element. An N6-acetyllysine modification is found at K268. Residues A274–Y291 traverse the membrane as a helical segment. Residues D292 to I298 are Mitochondrial intermembrane-facing.

Belongs to the mitochondrial carrier (TC 2.A.29) family. Monomer. Found in a complex with ARL2, ARL2BP and SLC25A6/ANT3. In terms of processing, trimethylated by ANTKMT at Lys-52.

The protein localises to the mitochondrion inner membrane. The protein resides in the membrane. The catalysed reaction is ADP(in) + ATP(out) = ADP(out) + ATP(in). It catalyses the reaction H(+)(in) = H(+)(out). With respect to regulation, the matrix-open state (m-state) is inhibited by the membrane-permeable bongkrekic acid (BKA). The cytoplasmic-open state (c-state) is inhibited by the membrane-impermeable toxic inhibitor carboxyatractyloside (CATR). Proton transporter activity is inhibited by ADP:ATP antiporter activity. In terms of biological role, ADP:ATP antiporter that mediates import of ADP into the mitochondrial matrix for ATP synthesis, and export of ATP out to fuel the cell. Cycles between the cytoplasmic-open state (c-state) and the matrix-open state (m-state): operates by the alternating access mechanism with a single substrate-binding site intermittently exposed to either the cytosolic (c-state) or matrix (m-state) side of the inner mitochondrial membrane. In addition to its ADP:ATP antiporter activity, also involved in mitochondrial uncoupling and mitochondrial permeability transition pore (mPTP) activity. Plays a role in mitochondrial uncoupling by acting as a proton transporter: proton transport uncouples the proton flows via the electron transport chain and ATP synthase to reduce the efficiency of ATP production and cause mitochondrial thermogenesis. Proton transporter activity is inhibited by ADP:ATP antiporter activity, suggesting that SLC25A6/ANT3 acts as a master regulator of mitochondrial energy output by maintaining a delicate balance between ATP production (ADP:ATP antiporter activity) and thermogenesis (proton transporter activity). Proton transporter activity requires free fatty acids as cofactor, but does not transport it. Also plays a key role in mPTP opening, a non-specific pore that enables free passage of the mitochondrial membranes to solutes of up to 1.5 kDa, and which contributes to cell death. It is however unclear if SLC25A6/ANT3 constitutes a pore-forming component of mPTP or regulates it. The chain is ADP/ATP translocase 3 from Sus scrofa (Pig).